We begin with the raw amino-acid sequence, 392 residues long: Formate-dependent phosphoribosylglycinamide formyltransferase (392 aa).

N(1)-(5-phospho-beta-D-ribosyl)glycinamide is bound by residues 15–16 and glutamate 75; that span reads EL. ATP-binding positions include arginine 107, lysine 148, 153 to 158, 188 to 191, and glutamate 196; these read SSGKGQ and EEFL. The ATP-grasp domain maps to 112–302; that stretch reads DLAAGELNLR…EFELHLRAVL (191 aa). Positions 261 and 273 each coordinate Mg(2+). N(1)-(5-phospho-beta-D-ribosyl)glycinamide is bound by residues aspartate 280, lysine 350, and 357–358; that span reads RR.

It belongs to the PurK/PurT family. As to quaternary structure, homodimer.

It carries out the reaction N(1)-(5-phospho-beta-D-ribosyl)glycinamide + formate + ATP = N(2)-formyl-N(1)-(5-phospho-beta-D-ribosyl)glycinamide + ADP + phosphate + H(+). The protein operates within purine metabolism; IMP biosynthesis via de novo pathway; N(2)-formyl-N(1)-(5-phospho-D-ribosyl)glycinamide from N(1)-(5-phospho-D-ribosyl)glycinamide (formate route): step 1/1. Involved in the de novo purine biosynthesis. Catalyzes the transfer of formate to 5-phospho-ribosyl-glycinamide (GAR), producing 5-phospho-ribosyl-N-formylglycinamide (FGAR). Formate is provided by PurU via hydrolysis of 10-formyl-tetrahydrofolate. This is Formate-dependent phosphoribosylglycinamide formyltransferase from Synechococcus sp. (strain CC9605).